The following is a 184-amino-acid chain: UPF0149 protein PputW619_5026 (184 aa).

It belongs to the UPF0149 family.

In Pseudomonas putida (strain W619), this protein is UPF0149 protein PputW619_5026.